A 329-amino-acid chain; its full sequence is Thioredoxin domain-containing protein 6 (329 aa).

One can recognise a Thioredoxin domain in the interval 11 to 115; sequence QVNINTQELW…QKTILQQLEA (105 aa). The interval 157–303 is NDK; the sequence is GKTCTLGIIK…LFPSFKFSDK (147 aa). The segment at 303-329 is disordered; sequence KDKEAPPGAEAQTMVGPVEDPCMSERI.

The protein belongs to the NDK family. As to quaternary structure, monomer and homodimer. As to expression, expressed in lung airway epithelium (at protein level).

Its subcellular location is the cytoplasm. It localises to the cytoskeleton. The protein localises to the cilium axoneme. It is found in the dynein axonemal particle. In terms of biological role, may be a regulator of microtubule physiology. The polypeptide is Thioredoxin domain-containing protein 6 (Mus musculus (Mouse)).